We begin with the raw amino-acid sequence, 219 residues long: 7-cyano-7-deazaguanine synthase (219 aa).

ATP is bound at residue 10–20 (FSGGQDSTTCL). The Zn(2+) site is built by cysteine 186, cysteine 195, cysteine 198, and cysteine 201.

Belongs to the QueC family. Homodimer. The cofactor is Zn(2+).

The enzyme catalyses 7-carboxy-7-deazaguanine + NH4(+) + ATP = 7-cyano-7-deazaguanine + ADP + phosphate + H2O + H(+). It functions in the pathway purine metabolism; 7-cyano-7-deazaguanine biosynthesis. In terms of biological role, catalyzes the ATP-dependent conversion of 7-carboxy-7-deazaguanine (CDG) to 7-cyano-7-deazaguanine (preQ(0)). The polypeptide is 7-cyano-7-deazaguanine synthase (Bacillus licheniformis (strain ATCC 14580 / DSM 13 / JCM 2505 / CCUG 7422 / NBRC 12200 / NCIMB 9375 / NCTC 10341 / NRRL NRS-1264 / Gibson 46)).